Reading from the N-terminus, the 368-residue chain is tRNA-specific 2-thiouridylase MnmA (368 aa).

ATP contacts are provided by residues 11–18 (GMSGGVDS) and Met-37. An interaction with target base in tRNA region spans residues 97-99 (NPD). Cys-102 serves as the catalytic Nucleophile. Cys-102 and Cys-199 are disulfide-bonded. Residue Gly-127 participates in ATP binding. The interaction with tRNA stretch occupies residues 149–151 (KDQ). Cys-199 serves as the catalytic Cysteine persulfide intermediate. The interval 311–312 (RY) is interaction with tRNA.

The protein belongs to the MnmA/TRMU family. Interacts with TusE.

It is found in the cytoplasm. It carries out the reaction S-sulfanyl-L-cysteinyl-[protein] + uridine(34) in tRNA + AH2 + ATP = 2-thiouridine(34) in tRNA + L-cysteinyl-[protein] + A + AMP + diphosphate + H(+). In terms of biological role, catalyzes the 2-thiolation of uridine at the wobble position (U34) of tRNA(Lys), tRNA(Glu) and tRNA(Gln), leading to the formation of s(2)U34, the first step of tRNA-mnm(5)s(2)U34 synthesis. Sulfur is provided by IscS, via a sulfur-relay system. Binds ATP and its substrate tRNAs. The chain is tRNA-specific 2-thiouridylase MnmA from Escherichia coli O157:H7.